The following is a 507-amino-acid chain: MKNFSKFALTSIAALTVASPLVNTEVDAKDKVSATQNIDAKVTQESQATDALKELPKSENIKKHYKDYKVTDTEKDNKGFTHYTLQPKVGNTYAPDKEVKVHTNKEGKVVLVNGDTDAKKVQPTNKVSISKESATDKAFEAIKIDRQKAKNLKSDVIKTNKVEIDGEKNKYVYNIEIITTSPKISHWNVKIDAETGQVVDKLNMIKEAATTGTGKGVLGDTKQININSVSGGYALQDLTQQGTLSAYNYDANTGQAYLMQDKDRNFDDDEQRAGVDANYYAKETYDYYKNTFGRESYDNQGSPIISLAHVNNFQGQDNRNNAAWIGDKMIYGDGDGRTFTALSGANDVVAHEITHGVTQQTANLVYRSQSGALNESFSDVFGYFVDDEDFLMGEDVYTPGVGGDALRSMSNPERFGQPSHMNDFVYTNSDNGGVHTNSGIPNKAAYNTIRSIGKQRSEQIYYRALTVYLTSNSDFQDAKASLQQAALDLYGEGIAQQVGQAWDSVGV.

The signal sequence occupies residues 1–28 (MKNFSKFALTSIAALTVASPLVNTEVDA). Positions 29-207 (KDKVSATQNI…VVDKLNMIKE (179 aa)) are excised as a propeptide. Asp347 lines the Ca(2+) pocket. Position 351 (His351) interacts with Zn(2+). The active site involves Glu352. The Zn(2+) site is built by His355 and Glu375. Positions 386, 388, 389, 391, 394, 397, 398, 401, and 404 each coordinate Ca(2+). His435 functions as the Proton donor in the catalytic mechanism.

Belongs to the peptidase M4 family. The cofactor is Ca(2+). Zn(2+) is required as a cofactor.

Its subcellular location is the secreted. In terms of biological role, protease that has a low substrate specificity. Glucagon is preferentially cleaved between aromatic (Phe) and hydrophobic (Val) amino acids. Hydrolyzes casein and elastin. In Staphylococcus epidermidis, this protein is Extracellular elastase (sepA).